The following is a 427-amino-acid chain: Glutamate-1-semialdehyde 2,1-aminomutase (427 aa).

N6-(pyridoxal phosphate)lysine is present on Lys-265.

It belongs to the class-III pyridoxal-phosphate-dependent aminotransferase family. HemL subfamily. In terms of assembly, homodimer. The cofactor is pyridoxal 5'-phosphate.

It is found in the cytoplasm. The enzyme catalyses (S)-4-amino-5-oxopentanoate = 5-aminolevulinate. It participates in porphyrin-containing compound metabolism; protoporphyrin-IX biosynthesis; 5-aminolevulinate from L-glutamyl-tRNA(Glu): step 2/2. The protein is Glutamate-1-semialdehyde 2,1-aminomutase of Burkholderia vietnamiensis (strain G4 / LMG 22486) (Burkholderia cepacia (strain R1808)).